Reading from the N-terminus, the 539-residue chain is MALQSQASEEAKGPWQEADQEQQEPVGSPEPESEPEPEPEPEPVPVPPPEPQPEPQPLPDPAPLPELEFESERVHEPEPTPTVETRGTARGFQPPEGGFGWVVVFAATWCNGSIFGIHNSVGILYSMLLEEEKEKNRQVEFQAAWVGALAMGMIFFCSPIVSIFTDRLGCRITATAGAAVAFIGLHTSSFTSSLSLRYFTYGILFGCGCSFAFQPSLVILGHYFQRRLGLANGVVSAGSSIFSMSFPFLIRMLGDKIKLAQTFQVLSTFMFVLMLLSLTYRPLLPSSQDTPSKRGVRTLHQRFLAQLRKYFNMRVFRQRTYRIWAFGIAAAALGYFVPYVHLMKYVEEEFSEIKETWVLLVCIGATSGLGRLVSGHISDSIPGLKKIYLQVLSFLLLGLMSMMIPLCRDFGGLIVVCLFLGLCDGFFITIMAPIAFELVGPMQASQAIGYLLGMMALPMIAGPPIAGLLRNCFGDYHVAFYFAGVPPIIGAVILFFVPLMHQRMFKKEQRDSSKDKMLAPDPDPNGELLPGSPNPEEPI.

Residues 1–92 (MALQSQASEE…VETRGTARGF (92 aa)) are disordered. A2 is modified (N-acetylalanine). The Cytoplasmic portion of the chain corresponds to 2–96 (ALQSQASEEA…GTARGFQPPE (95 aa)). The span at 31–41 (PESEPEPEPEP) shows a compositional bias: acidic residues. Over residues 42 to 64 (EPVPVPPPEPQPEPQPLPDPAPL) the composition is skewed to pro residues. A helical transmembrane segment spans residues 97-117 (GGFGWVVVFAATWCNGSIFGI). Over 118-143 (HNSVGILYSMLLEEEKEKNRQVEFQA) the chain is Extracellular. Residues 144–164 (AWVGALAMGMIFFCSPIVSIF) form a helical membrane-spanning segment. At 165 to 171 (TDRLGCR) the chain is on the cytoplasmic side. The helical transmembrane segment at 172–192 (ITATAGAAVAFIGLHTSSFTS) threads the bilayer. Residues 193–200 (SLSLRYFT) lie on the Extracellular side of the membrane. The helical transmembrane segment at 201-221 (YGILFGCGCSFAFQPSLVILG) threads the bilayer. Residues 222-229 (HYFQRRLG) lie on the Cytoplasmic side of the membrane. A helical transmembrane segment spans residues 230–250 (LANGVVSAGSSIFSMSFPFLI). The Extracellular segment spans residues 251-258 (RMLGDKIK). A helical membrane pass occupies residues 259–279 (LAQTFQVLSTFMFVLMLLSLT). At 280 to 322 (YRPLLPSSQDTPSKRGVRTLHQRFLAQLRKYFNMRVFRQRTYR) the chain is on the cytoplasmic side. Residues 323–343 (IWAFGIAAAALGYFVPYVHLM) traverse the membrane as a helical segment. The Extracellular segment spans residues 344–356 (KYVEEEFSEIKET). Residues 357–377 (WVLLVCIGATSGLGRLVSGHI) traverse the membrane as a helical segment. The Cytoplasmic portion of the chain corresponds to 378 to 386 (SDSIPGLKK). Residues 387–407 (IYLQVLSFLLLGLMSMMIPLC) traverse the membrane as a helical segment. The Extracellular portion of the chain corresponds to 408–409 (RD). The chain crosses the membrane as a helical span at residues 410–430 (FGGLIVVCLFLGLCDGFFITI). Topologically, residues 431–447 (MAPIAFELVGPMQASQA) are cytoplasmic. A helical membrane pass occupies residues 448–468 (IGYLLGMMALPMIAGPPIAGL). The Extracellular segment spans residues 469–477 (LRNCFGDYH). A helical membrane pass occupies residues 478–498 (VAFYFAGVPPIIGAVILFFVP). The Cytoplasmic portion of the chain corresponds to 499–539 (LMHQRMFKKEQRDSSKDKMLAPDPDPNGELLPGSPNPEEPI). Over residues 508-518 (EQRDSSKDKML) the composition is skewed to basic and acidic residues. The disordered stretch occupies residues 508–539 (EQRDSSKDKMLAPDPDPNGELLPGSPNPEEPI).

Belongs to the major facilitator superfamily. Monocarboxylate porter (TC 2.A.1.13) family. As to quaternary structure, monomer. Homodimer. Homooligomer. As to expression, highly expressed in liver and heart. In adult brain tissue expression is largely confined to endothelial cells of the blood-brain barrier (at protein level).

The protein resides in the cell membrane. It is found in the apical cell membrane. It carries out the reaction 3,3',5-triiodo-L-thyronine(out) = 3,3',5-triiodo-L-thyronine(in). It catalyses the reaction L-thyroxine(out) = L-thyroxine(in). The catalysed reaction is 3,3',5'-triiodo-L-thyronine(out) = 3,3',5'-triiodo-L-thyronine(in). The enzyme catalyses 3,3'-diiodo-L-thyronine(out) = 3,3'-diiodo-L-thyronine(in). In terms of biological role, specific thyroid hormone transmembrane transporter, that mediates both uptake and efflux of thyroid hormones across the cell membrane independently of pH or a Na(+) gradient. Major substrates are the iodothyronines T3 and T4 and to a lesser extent rT3 and 3,3-diiodothyronine (3,3'-T2). Acts as an important mediator of thyroid hormone transport, especially T3, through the blood-brain barrier. In Homo sapiens (Human), this protein is Monocarboxylate transporter 8 (SLC16A2).